The primary structure comprises 280 residues: MKLAAMIKKMCPSDSELSIPAKNCYRMVILGSSKVGKTAIVSRFLTGRFEDAYTPTIEDFHRKFYSIRGEVYQLDILDTSGNHPFPAMRRLSILTGDVFILVFSLDNRDSFEEVQRLKQQILDTKSCLKNKTKENVDVPLVICGNKGDRDFYREVEQREIEQLVGDDPQRCAYFEISAKKNSSLDQMFRALFAMAKLPSEMSPDLHRKVSVQYCDVLHKKALRNKKLLRAGSGGGGDHGDAFGILAPFARRPSVHSDLMYIREKTSVGSQAKDKERCVIS.

S-nitrosocysteine is present on Cys11. Residue 31-38 coordinates GTP; sequence GSSKVGKT. Residues 53 to 61 carry the Effector region motif; that stretch reads YTPTIEDFH. GTP-binding positions include 78 to 82 and 145 to 148; these read DTSGN and NKGD. Cysteine methyl ester is present on Cys277. The S-farnesyl cysteine moiety is linked to residue Cys277. Residues 278–280 constitute a propeptide, removed in mature form; that stretch reads VIS.

Belongs to the small GTPase superfamily. RasD family. Component of a complex, at least composed of APBB1, RASD1/DEXRAS1 and APP. Interacts with APBB1/FE65. Forms a ternary complex with CAPON and NOS1. In terms of processing, S-nitrosylation stimulates guanine-nucleotide exchange activity. In terms of tissue distribution, expressed in brain, heart, kidney and liver.

Its subcellular location is the cell membrane. It is found in the cytoplasm. The protein resides in the perinuclear region. It localises to the nucleus. Small GTPase. Negatively regulates the transcription regulation activity of the APBB1/FE65-APP complex via its interaction with APBB1/FE65. The sequence is that of Dexamethasone-induced Ras-related protein 1 (Rasd1) from Mus musculus (Mouse).